A 161-amino-acid chain; its full sequence is Aklanonic acid methyl ester cyclase DauD (161 aa).

Position 106 (glutamine 106) interacts with substrate. The disordered stretch occupies residues 137-161 (WPTPEGWRPCPPPPRRRHDRSTDTP).

It belongs to the polyketide cyclase DnrD family. As to quaternary structure, homotetramer.

It catalyses the reaction methyl aklanonate = aklaviketone. It participates in antibiotic biosynthesis; daunorubicin biosynthesis. The protein operates within antibiotic biosynthesis; carminomycin biosynthesis. It functions in the pathway antibiotic biosynthesis; rhodomycin biosynthesis. Its pathway is antibiotic biosynthesis; aclacinomycin biosynthesis. Involved in the biosynthesis of aklavinone which is an important precursor common to the formation of the clinically significant anthracyclines such as carminomycin, daunorubicin (daunomycin), rhodomycin, aclacinomycin T (aklavin) and aclacinomycin A (aclarubicin). These compounds are aromatic polyketide antibiotics that exhibit high cytotoxicity and are widely applied in the chemotherapy of a variety of cancers. Catalyzes the cyclization of aklanonic acid methyl ester to yield aklaviketone. The sequence is that of Aklanonic acid methyl ester cyclase DauD (dauD) from Streptomyces sp. (strain C5).